A 470-amino-acid polypeptide reads, in one-letter code: Sperm-associated antigen 8 (470 aa).

Residues 1–21 (METTESTEGSLSRSCDVQPSS) are compositionally biased toward polar residues. Disordered stretches follow at residues 1 to 70 (METT…PPAH), 117 to 178 (SGTC…GQGP), and 302 to 321 (LTTQ…DSYQ). Over residues 27-48 (PSEPVPSSSSSPRSTAPAEAPA) the composition is skewed to low complexity. Positions 51-60 (SVLTEPSSDS) are enriched in polar residues. 2 stretches are compositionally biased toward low complexity: residues 122–175 (LGQS…ADPG) and 303–316 (TTQP…STTQ). 2 mn regions span residues 312–325 (SSTT…LPRH) and 364–378 (ESVT…LVRA).

Belongs to the SPAG8 family. As to quaternary structure, microtubule inner protein component of sperm flagellar doublet microtubules. Interacts with FHL5 (via second LIM domain). Interacts with RANBP9. As to expression, expressed in testis (at protein level). Not detected in brain, heart, kidney, spleen, liver, lung, thymus and colon (at protein level).

It localises to the cytoplasm. The protein localises to the nucleus. It is found in the cytoplasmic vesicle. Its subcellular location is the secretory vesicle. The protein resides in the acrosome. It localises to the cytoskeleton. The protein localises to the microtubule organizing center. It is found in the spindle. Its subcellular location is the cilium axoneme. The protein resides in the flagellum axoneme. Functionally, microtubule inner protein (MIP) part of the dynein-decorated doublet microtubules (DMTs) in cilia axoneme, which is required for motile cilia beating. Plays a role in spermatogenesis by enhancing the binding of CREM isoform tau to its coactivator FHL5 and increasing the FHL5-regulated transcriptional activation of CREM isoform tau. Involved in the acrosome reaction and in binding of sperm to the zona pellucida. Plays a role in regulation of the cell cycle by controlling progression through the G2/M phase, possibly by delaying the activation of CDK1 which is required for entry into mitosis. May play a role in fertility and microtubule formation through interaction with RANBP9. This is Sperm-associated antigen 8 from Mus musculus (Mouse).